Here is a 375-residue protein sequence, read N- to C-terminus: S-adenosylmethionine:tRNA ribosyltransferase-isomerase (375 aa).

This sequence belongs to the QueA family. In terms of assembly, monomer.

Its subcellular location is the cytoplasm. It carries out the reaction 7-aminomethyl-7-carbaguanosine(34) in tRNA + S-adenosyl-L-methionine = epoxyqueuosine(34) in tRNA + adenine + L-methionine + 2 H(+). It functions in the pathway tRNA modification; tRNA-queuosine biosynthesis. Functionally, transfers and isomerizes the ribose moiety from AdoMet to the 7-aminomethyl group of 7-deazaguanine (preQ1-tRNA) to give epoxyqueuosine (oQ-tRNA). This Rickettsia typhi (strain ATCC VR-144 / Wilmington) protein is S-adenosylmethionine:tRNA ribosyltransferase-isomerase.